Reading from the N-terminus, the 302-residue chain is Elongation factor Ts (302 aa).

The segment at 80–83 is involved in Mg(2+) ion dislocation from EF-Tu; sequence TDFV.

Belongs to the EF-Ts family.

It localises to the cytoplasm. Associates with the EF-Tu.GDP complex and induces the exchange of GDP to GTP. It remains bound to the aminoacyl-tRNA.EF-Tu.GTP complex up to the GTP hydrolysis stage on the ribosome. This chain is Elongation factor Ts, found in Gluconobacter oxydans (strain 621H) (Gluconobacter suboxydans).